The primary structure comprises 223 residues: MKQESASQSTPPPSLSPAPSSAQPSWGDGDPQALWIFGYGSLVWKPDFAYSDSRVGFVRGYSRRFWQGDTFHRGSDKMPGRVVTLLEDREGCTWGVAYQVRGEQVNEALKYLNVREAVLGGYDTKEVTFYPQDTPDQPLTALAYVATPQNPGYLGPAPEEVIATQILACRGFSGHNLEYLLRLADFMQLCGPQAQDEHLEAIVDAVGTLLPCSYLPEQPLALT.

The tract at residues 1–26 (MKQESASQSTPPPSLSPAPSSAQPSW) is disordered. 36-41 (IFGYGS) is a binding site for substrate. The Proton acceptor role is filled by Glu-116.

Belongs to the gamma-glutamylcyclotransferase family. ChaC subfamily. In terms of assembly, interacts with NOTCH1 (via extracellular region). As to expression, widely expressed, with high expression in forebrain and anterior spinal cord. Expressed at intermediate level in the dorsal aorta and heart. Present throughout adult brain (at protein level).

Its subcellular location is the cytoplasm. It is found in the cytosol. The protein localises to the golgi apparatus. It localises to the trans-Golgi network. The enzyme catalyses glutathione = L-cysteinylglycine + 5-oxo-L-proline. In terms of biological role, catalyzes the cleavage of glutathione into 5-oxo-L-proline and a Cys-Gly dipeptide. Acts specifically on glutathione, but not on other gamma-glutamyl peptides. Glutathione depletion is an important factor for apoptosis initiation and execution. Acts as a pro-apoptotic component of the unfolded protein response pathway by mediating the pro-apoptotic effects of the ATF4-ATF3-DDIT3/CHOP cascade. Negative regulator of Notch signaling pathway involved in embryonic neurogenesis: acts by inhibiting Notch cleavage by furin, maintaining Notch in an immature inactive form, thereby promoting neurogenesis in embryos. The protein is Glutathione-specific gamma-glutamylcyclotransferase 1 of Mus musculus (Mouse).